A 230-amino-acid polypeptide reads, in one-letter code: 2,3-bisphosphoglycerate-dependent phosphoglycerate mutase (230 aa).

Residues 8-15, 21-22, arginine 60, 87-90, lysine 98, 114-115, and 183-184 each bind substrate; these read RHGESEWN, TG, ERHY, RR, and GN. Histidine 9 acts as the Tele-phosphohistidine intermediate in catalysis. Residue glutamate 87 is the Proton donor/acceptor of the active site.

It belongs to the phosphoglycerate mutase family. BPG-dependent PGAM subfamily.

The enzyme catalyses (2R)-2-phosphoglycerate = (2R)-3-phosphoglycerate. The protein operates within carbohydrate degradation; glycolysis; pyruvate from D-glyceraldehyde 3-phosphate: step 3/5. Functionally, catalyzes the interconversion of 2-phosphoglycerate and 3-phosphoglycerate. The chain is 2,3-bisphosphoglycerate-dependent phosphoglycerate mutase from Streptococcus thermophilus (strain CNRZ 1066).